The following is a 102-amino-acid chain: MTAKICIVIKSFENQRSGLLLNTRKIGLPKKQTLYTVLRSPHIDKKSREQFEMRIHKQLLVIETETHKLREKLNWLKLHDLLGVQVKIIFYYQTRLDKVCKS.

It belongs to the universal ribosomal protein uS10 family.

The protein resides in the mitochondrion. This is Small ribosomal subunit protein uS10m (RPS10) from Marchantia polymorpha (Common liverwort).